The primary structure comprises 230 residues: Cyclin-U2-2 (230 aa).

This sequence belongs to the cyclin family. Cyclin U/P subfamily. As to quaternary structure, interacts with CDKA-1. As to expression, expressed in roots and stems. Expressed in the shoot apex, leaf primordia and young leaves.

The protein is Cyclin-U2-2 (CYCU2-2) of Arabidopsis thaliana (Mouse-ear cress).